The sequence spans 191 residues: uncharacterized protein (191 aa).

Residues 52–112 (NKQENQTESS…TNKDTNIETN (61 aa)) form a disordered region. The span at 57-70 (QTESSDLNNTDSLV) shows a compositional bias: polar residues. A compositionally biased stretch (low complexity) spans 71–94 (DSNSDNQTNTTDTSTNNVENLNEN). Residues 138–172 (QDKISDTERIRFLEEKVSKLERKIRTLSLQMTKIS) are a coiled coil.

This is an uncharacterized protein from Acanthamoeba polyphaga mimivirus (APMV).